Consider the following 494-residue polypeptide: Adenosylhomocysteinase (494 aa).

Substrate-binding residues include Thr72, Asp155, and Glu217. Residue 218 to 220 coordinates NAD(+); it reads TTT. Positions 247 and 251 each coordinate substrate. Residues Asn252, 281–286, Glu304, Asn339, 360–362, and Asn408 contribute to the NAD(+) site; these read GYGDVG and IGH.

The protein belongs to the adenosylhomocysteinase family. NAD(+) serves as cofactor.

The protein resides in the cytoplasm. It carries out the reaction S-adenosyl-L-homocysteine + H2O = L-homocysteine + adenosine. Its pathway is amino-acid biosynthesis; L-homocysteine biosynthesis; L-homocysteine from S-adenosyl-L-homocysteine: step 1/1. May play a key role in the regulation of the intracellular concentration of adenosylhomocysteine. This Nocardia farcinica (strain IFM 10152) protein is Adenosylhomocysteinase.